The following is a 209-amino-acid chain: Ribosomal RNA large subunit methyltransferase E (209 aa).

Positions 63, 65, 83, 99, and 124 each coordinate S-adenosyl-L-methionine. The Proton acceptor role is filled by lysine 164.

Belongs to the class I-like SAM-binding methyltransferase superfamily. RNA methyltransferase RlmE family.

It is found in the cytoplasm. It catalyses the reaction uridine(2552) in 23S rRNA + S-adenosyl-L-methionine = 2'-O-methyluridine(2552) in 23S rRNA + S-adenosyl-L-homocysteine + H(+). Functionally, specifically methylates the uridine in position 2552 of 23S rRNA at the 2'-O position of the ribose in the fully assembled 50S ribosomal subunit. The protein is Ribosomal RNA large subunit methyltransferase E of Serratia proteamaculans (strain 568).